The sequence spans 308 residues: Pseudouridine-5'-phosphate glycosidase (308 aa).

The active-site Proton donor is Glu26. Substrate is bound by residues Lys87 and Val107. Asp139 contacts Mn(2+). A substrate-binding site is contributed by 141–143 (SAD). Lys160 acts as the Nucleophile in catalysis.

This sequence belongs to the pseudouridine-5'-phosphate glycosidase family. As to quaternary structure, homotrimer. Requires Mn(2+) as cofactor.

The catalysed reaction is D-ribose 5-phosphate + uracil = psi-UMP + H2O. Its function is as follows. Catalyzes the reversible cleavage of pseudouridine 5'-phosphate (PsiMP) to ribose 5-phosphate and uracil. Functions biologically in the cleavage direction, as part of a pseudouridine degradation pathway. This is Pseudouridine-5'-phosphate glycosidase from Legionella pneumophila subsp. pneumophila (strain Philadelphia 1 / ATCC 33152 / DSM 7513).